The chain runs to 300 residues: MNFQGLVLTDNCKNQWVVGPLIGKGGFGSIYTTNDNNYVVKIEPKANGSLFTEQAFYTRVLKPSVIEEWKKSHNIKHVGLITCKAFGLYKSINVEYRFLVINRLGADLDAVIRANNNRLPKRSVMLIGIEILNTIQFMHEQGYSHGDIKASNIVLDQIDKNKLYLVDYGLVSKFMSNGEHVPFIRNPNKMDNGTLEFTPIDSHKGYVVSRRGDLETLGYCMIRWLGGILPWTKISETKNCALVSATKQKYVNNTATLLMTSLQYAPRELLQYITMVNSLTYFEEPNYDKFRHILMQGVYY.

Positions 16 to 282 (WVVGPLIGKG…ITMVNSLTYF (267 aa)) constitute a Protein kinase domain. ATP is bound by residues 22-30 (IGKGGFGSI) and Lys45. Residue Asp147 is the Proton acceptor of the active site.

The protein belongs to the protein kinase superfamily. Ser/Thr protein kinase family. Poxviruses subfamily. In terms of assembly, interacts with host JIP1; this interaction increases the amount of MAPK bound to JIP1 and subsequently increases the activity of transcription factors, such as JUN, that respond to these complexes. Interacts with protein OPG198; this interaction inhibits the repressive activity of OPG198 pseudokinase on viral replication factory formation. Mg(2+) serves as cofactor. In terms of processing, autophosphorylated.

The protein resides in the virion. Its subcellular location is the host cytoplasm. The catalysed reaction is L-seryl-[protein] + ATP = O-phospho-L-seryl-[protein] + ADP + H(+). It catalyses the reaction L-threonyl-[protein] + ATP = O-phospho-L-threonyl-[protein] + ADP + H(+). Its function is as follows. Essential serine/threonine-protein kinase that plays different role in the viral life cycle. Phosphorylates the host small ribosomal protein RACK1 thereby customizing the ribosomes to a state optimal for viral mRNAs (which contain poly-A leaders) but not for host mRNAs. Facilitates viral DNA replication by inhibiting host BANF1, a cellular host defense responsive to foreign DNA. Phosphorylates host BANF1 on serine and threonine residues; this leads to BANF1 relocalization to the cytoplasm, loss of dimerization and impaired DNA binding activity. Indeed, BANF1 activity depends on its DNA-binding property which is blocked by VPK1-mediated phosphorylation. Required for viral intermediate genes expression, probably by inhibiting host BANF1. Modulates cellular responses via host JUN by two different mechanisms, either by direct phosphorylation or by modulation of upstream JIP1-MAPK complexes. Seems to participate in the accumulation/processing of late proteins and thus in virion maturation. In addition, inhibits B12 repressive activity on viral DNA replication via a phosphorylation-dependent mechanism. In Vaccinia virus (strain Ankara) (VACV), this protein is B1 kinase (OPG187).